A 678-amino-acid polypeptide reads, in one-letter code: DNA ligase (678 aa).

Residues 35–39 (DSVYD), 84–85 (SL), and E116 each bind NAD(+). K118 serves as the catalytic N6-AMP-lysine intermediate. The NAD(+) site is built by R139, E178, K297, and K321. Positions 415, 418, 433, and 438 each coordinate Zn(2+). The region spanning 600–678 (DGNQIFAGKT…EAQLLEMLNE (79 aa)) is the BRCT domain.

This sequence belongs to the NAD-dependent DNA ligase family. LigA subfamily. Mg(2+) serves as cofactor. Requires Mn(2+) as cofactor.

It carries out the reaction NAD(+) + (deoxyribonucleotide)n-3'-hydroxyl + 5'-phospho-(deoxyribonucleotide)m = (deoxyribonucleotide)n+m + AMP + beta-nicotinamide D-nucleotide.. Its function is as follows. DNA ligase that catalyzes the formation of phosphodiester linkages between 5'-phosphoryl and 3'-hydroxyl groups in double-stranded DNA using NAD as a coenzyme and as the energy source for the reaction. It is essential for DNA replication and repair of damaged DNA. This chain is DNA ligase, found in Nostoc punctiforme (strain ATCC 29133 / PCC 73102).